The primary structure comprises 248 residues: Proteasome subunit alpha type-7 (248 aa).

A glycan (O-linked (GlcNAc) serine) is linked at serine 130. Position 153 is a phosphotyrosine (tyrosine 153). N6-acetyllysine is present on lysine 227.

It belongs to the peptidase T1A family. The 26S proteasome consists of a 20S proteasome core and two 19S regulatory subunits. The 20S proteasome core is a barrel-shaped complex made of 28 subunits that are arranged in four stacked rings. The two outer rings are each formed by seven alpha subunits, and the two inner rings are formed by seven beta subunits. The proteolytic activity is exerted by three beta-subunits PSMB5, PSMB6 and PSMB7. PSMA7 interacts directly with the PSMG1-PSMG2 heterodimer which promotes 20S proteasome assembly. Interacts with HIF1A. Interacts with RAB7A. Interacts with PRKN. Interacts with ABL1 and ABL2. Interacts with EMAP2. Interacts with MAVS.

Its subcellular location is the cytoplasm. It is found in the nucleus. In terms of biological role, component of the 20S core proteasome complex involved in the proteolytic degradation of most intracellular proteins. This complex plays numerous essential roles within the cell by associating with different regulatory particles. Associated with two 19S regulatory particles, forms the 26S proteasome and thus participates in the ATP-dependent degradation of ubiquitinated proteins. The 26S proteasome plays a key role in the maintenance of protein homeostasis by removing misfolded or damaged proteins that could impair cellular functions, and by removing proteins whose functions are no longer required. Associated with the PA200 or PA28, the 20S proteasome mediates ubiquitin-independent protein degradation. This type of proteolysis is required in several pathways including spermatogenesis (20S-PA200 complex) or generation of a subset of MHC class I-presented antigenic peptides (20S-PA28 complex). Inhibits the transactivation function of HIF-1A under both normoxic and hypoxia-mimicking conditions. The interaction with EMAP2 increases the proteasome-mediated HIF-1A degradation under the hypoxic conditions. Plays a role in hepatitis C virus internal ribosome entry site-mediated translation. Mediates nuclear translocation of the androgen receptor (AR) and thereby enhances androgen-mediated transactivation. Promotes MAVS degradation and thereby negatively regulates MAVS-mediated innate immune response. The protein is Proteasome subunit alpha type-7 (PSMA7) of Bos taurus (Bovine).